Consider the following 334-residue polypeptide: Transcription initiation factor IIB (334 aa).

Residues 34-65 (EELVCPMCDSKNIIKDYEKAEIVCEDCGCVLQ) form a TFIIB-type zinc finger. 4 residues coordinate Zn(2+): C38, C41, C57, and C60. Repeat copies occupy residues 151 to 234 (SELD…SREL) and 245 to 326 (DYVP…ELTE).

The protein belongs to the TFIIB family.

Stabilizes TBP binding to an archaeal box-A promoter. Also responsible for recruiting RNA polymerase II to the pre-initiation complex (DNA-TBP-TFIIB). In Methanococcus aeolicus (strain ATCC BAA-1280 / DSM 17508 / OCM 812 / Nankai-3), this protein is Transcription initiation factor IIB.